Reading from the N-terminus, the 722-residue chain is Polyribonucleotide nucleotidyltransferase (722 aa).

Mg(2+) is bound by residues Asp-505 and Asp-511. In terms of domain architecture, KH spans 572 to 631 (PSITTIKIHPDKIRDVIGKGGATIRGICDETGASIDLDDDGNVKIYADNAAAAQAAVNRV). An S1 motif domain is found at 641–709 (GAIYKGRVER…NRGRVKLSMK (69 aa)).

It belongs to the polyribonucleotide nucleotidyltransferase family. In terms of assembly, component of the RNA degradosome, which is a multiprotein complex involved in RNA processing and mRNA degradation. Mg(2+) is required as a cofactor.

It localises to the cytoplasm. The enzyme catalyses RNA(n+1) + phosphate = RNA(n) + a ribonucleoside 5'-diphosphate. Its function is as follows. Involved in mRNA degradation. Catalyzes the phosphorolysis of single-stranded polyribonucleotides processively in the 3'- to 5'-direction. The chain is Polyribonucleotide nucleotidyltransferase from Marinobacter nauticus (strain ATCC 700491 / DSM 11845 / VT8) (Marinobacter aquaeolei).